A 251-amino-acid polypeptide reads, in one-letter code: Imidazole glycerol phosphate synthase subunit HisF (251 aa).

Catalysis depends on residues D10 and D129.

The protein belongs to the HisA/HisF family. Heterodimer of HisH and HisF.

The protein resides in the cytoplasm. The enzyme catalyses 5-[(5-phospho-1-deoxy-D-ribulos-1-ylimino)methylamino]-1-(5-phospho-beta-D-ribosyl)imidazole-4-carboxamide + L-glutamine = D-erythro-1-(imidazol-4-yl)glycerol 3-phosphate + 5-amino-1-(5-phospho-beta-D-ribosyl)imidazole-4-carboxamide + L-glutamate + H(+). It functions in the pathway amino-acid biosynthesis; L-histidine biosynthesis; L-histidine from 5-phospho-alpha-D-ribose 1-diphosphate: step 5/9. IGPS catalyzes the conversion of PRFAR and glutamine to IGP, AICAR and glutamate. The HisF subunit catalyzes the cyclization activity that produces IGP and AICAR from PRFAR using the ammonia provided by the HisH subunit. In Cutibacterium acnes (strain DSM 16379 / KPA171202) (Propionibacterium acnes), this protein is Imidazole glycerol phosphate synthase subunit HisF.